The sequence spans 124 residues: MLYAVLCYNDESVTSAWSKEEDERVMRDLSAVQRKYVEAGKLGPVARLVPTTAAATLRHSAGETIVMDGPFAETKEQLLGFYLIDCASLDEALDFARDLSNANPSTGSYEVRPLALYKPGELPS.

It belongs to the YciI family.

This is an uncharacterized protein from Rhizobium meliloti (strain 1021) (Ensifer meliloti).